Reading from the N-terminus, the 972-residue chain is RNA polymerase-associated protein RapA (972 aa).

In terms of domain architecture, Helicase ATP-binding spans 164 to 334 (EVGRRYAPRV…FARLRLLDPD (171 aa)). 177–184 (DEVGLGKT) contacts ATP. Residues 280–283 (DEAH) carry the DEAH box motif. Positions 493–671 (RVNWLLEMLK…HEPEALENLI (179 aa)) constitute a Helicase C-terminal domain.

The protein belongs to the SNF2/RAD54 helicase family. RapA subfamily. As to quaternary structure, interacts with the RNAP. Has a higher affinity for the core RNAP than for the holoenzyme. Its ATPase activity is stimulated by binding to RNAP.

Its function is as follows. Transcription regulator that activates transcription by stimulating RNA polymerase (RNAP) recycling in case of stress conditions such as supercoiled DNA or high salt concentrations. Probably acts by releasing the RNAP, when it is trapped or immobilized on tightly supercoiled DNA. Does not activate transcription on linear DNA. Probably not involved in DNA repair. In Photobacterium profundum (strain SS9), this protein is RNA polymerase-associated protein RapA.